A 252-amino-acid polypeptide reads, in one-letter code: MSRKPIIAGNWKMNKTLSEAQAFVEAVKNNLPSSDNVESVIGAPALFLAPMAYLRQGSELKLAAENSYFENAGAFTGENSPAAIVDLGIEYIIIGHSERREYFHETDEDINKKAKAIFAAGATPILCCGETLETFEAGKTAEWVSGQIEAGLAGLTAEQVSNLVIAYEPIWAIGTGKTATNEIADETCGVVRSTVEKLYGKEVSEAVRIQYGGSVKPETIEGLMAKENIDGALVGGASLEADSFLALLEMYK.

10 to 12 (NWK) is a binding site for substrate. The active-site Electrophile is His-96. Glu-168 functions as the Proton acceptor in the catalytic mechanism. Residues Gly-174, Ser-214, and 235–236 (GG) each bind substrate.

Belongs to the triosephosphate isomerase family. As to quaternary structure, homodimer.

The protein localises to the cytoplasm. It carries out the reaction D-glyceraldehyde 3-phosphate = dihydroxyacetone phosphate. Its pathway is carbohydrate biosynthesis; gluconeogenesis. The protein operates within carbohydrate degradation; glycolysis; D-glyceraldehyde 3-phosphate from glycerone phosphate: step 1/1. Involved in the gluconeogenesis. Catalyzes stereospecifically the conversion of dihydroxyacetone phosphate (DHAP) to D-glyceraldehyde-3-phosphate (G3P). This chain is Triosephosphate isomerase, found in Lactococcus lactis subsp. cremoris (strain MG1363).